The sequence spans 452 residues: MQRRIMGIETEFGVTCTFHGHRRLSPDEVARYLFRRVVSWGRSSNVFLRNGARLYLDVGSHPEYATAECDSLHQLVTHDRAGERVLEELLIDAEQRLAEEGIGGDIYLFKNNTDSAGNSYGCHENFLVVRAGEFSRISDVLLPFLVTRQLICGAGKVLQTPKAATFCLSQRAEHIWEGVSSATTRSRPIINTRDEPHADAEKYRRLHVIVGDSNMSETTTMLKVGTAALVLEMIEAGVAFRDFALDNPIRAIREVSHDLTGRRPVRLAGGRQASALDIQREYYARAVEHLRNRDRDPQIDQVVDLWGRALDAVEAQDFAKVDTEIDWVIKRKLFQRYQDRYDMELSDPKIAQLDLAYHDIKRGRGVFDLLQRKGLAKRITEDEAVDAAVDTPPQTTRAKLRGDFITAAQEAGRDFTVDWVHLKLNDQAQRTVLCKDPFRSVDERVDRLIASM.

Position 9 (E9) interacts with Mg(2+). Residue R53 participates in ATP binding. Mg(2+) is bound at residue Y55. The Proton acceptor role is filled by D57. Residue E63 coordinates Mg(2+). 2 residues coordinate ATP: T66 and W419.

This sequence belongs to the Pup ligase/Pup deamidase family. Pup-conjugating enzyme subfamily.

The enzyme catalyses ATP + [prokaryotic ubiquitin-like protein]-L-glutamate + [protein]-L-lysine = ADP + phosphate + N(6)-([prokaryotic ubiquitin-like protein]-gamma-L-glutamyl)-[protein]-L-lysine.. It functions in the pathway protein degradation; proteasomal Pup-dependent pathway. The protein operates within protein modification; protein pupylation. In terms of biological role, catalyzes the covalent attachment of the prokaryotic ubiquitin-like protein modifier Pup to the proteasomal substrate proteins, thereby targeting them for proteasomal degradation. This tagging system is termed pupylation. The ligation reaction involves the side-chain carboxylate of the C-terminal glutamate of Pup and the side-chain amino group of a substrate lysine. This is Pup--protein ligase from Nocardia farcinica (strain IFM 10152).